The chain runs to 377 residues: Dihydroorotase, mitochondrial (377 aa).

Zn(2+)-binding residues include His44, His46, Lys130, His168, and His206. N6-carboxylysine is present on Lys130. Phosphoserine is present on Ser223. Asp280 contacts Zn(2+).

This sequence belongs to the metallo-dependent hydrolases superfamily. DHOase family. Class II DHOase subfamily. It depends on Zn(2+) as a cofactor.

It localises to the mitochondrion. It carries out the reaction (S)-dihydroorotate + H2O = N-carbamoyl-L-aspartate + H(+). Its pathway is pyrimidine metabolism; UMP biosynthesis via de novo pathway; (S)-dihydroorotate from bicarbonate: step 3/3. In Arabidopsis thaliana (Mouse-ear cress), this protein is Dihydroorotase, mitochondrial (PYR4).